Reading from the N-terminus, the 337-residue chain is Glyceraldehyde-3-phosphate dehydrogenase 2 (337 aa).

NADP(+)-binding positions include 11 to 12 (RI), Asp-35, Arg-80, and Thr-122. D-glyceraldehyde 3-phosphate-binding positions include 153–155 (SCT), Thr-184, Arg-199, 212–213 (TG), and Arg-235. The Nucleophile role is filled by Cys-154. Residue Asn-317 participates in NADP(+) binding.

Belongs to the glyceraldehyde-3-phosphate dehydrogenase family. In terms of assembly, homotetramer.

It localises to the cytoplasm. It catalyses the reaction D-glyceraldehyde 3-phosphate + phosphate + NADP(+) = (2R)-3-phospho-glyceroyl phosphate + NADPH + H(+). It carries out the reaction D-glyceraldehyde 3-phosphate + phosphate + NAD(+) = (2R)-3-phospho-glyceroyl phosphate + NADH + H(+). It participates in carbohydrate biosynthesis; Calvin cycle. Functionally, gap2 has a major role in carbon fixation as a component of the Calvin cycle. Catalyzes the oxidative phosphorylation of glyceraldehyde 3-phosphate (G3P) to 1,3-bisphosphoglycerate (BPG) using the cofactor NAD. The first reaction step involves the formation of a hemiacetal intermediate between G3P and a cysteine residue, and this hemiacetal intermediate is then oxidized to a thioester, with concomitant reduction of NAD to NADH. The reduced NADH is then exchanged with the second NAD, and the thioester is attacked by a nucleophilic inorganic phosphate to produce BPG. The sequence is that of Glyceraldehyde-3-phosphate dehydrogenase 2 (gap2) from Trichormus variabilis (strain ATCC 29413 / PCC 7937) (Anabaena variabilis).